Reading from the N-terminus, the 84-residue chain is Acyl carrier protein homolog (84 aa).

The Carrier domain maps to 4 to 79; sequence HEILLKIKEI…DLVLEVKNLL (76 aa). Residue Ser-39 is modified to O-(pantetheine 4'-phosphoryl)serine.

4'-phosphopantetheine is transferred from CoA to a specific serine of the apo-ACP-like protein.

Its pathway is lipid metabolism; fatty acid biosynthesis. In terms of biological role, carrier of the growing fatty acid chain in fatty acid biosynthesis. This Mycoplasma genitalium (strain ATCC 33530 / DSM 19775 / NCTC 10195 / G37) (Mycoplasmoides genitalium) protein is Acyl carrier protein homolog.